We begin with the raw amino-acid sequence, 207 residues long: Probable glutathione S-transferase 5 (207 aa).

The GST N-terminal domain maps to 2 to 81 (VSYKLTYFNG…FLAREFKLNG (80 aa)). Glutathione is bound by residues Tyr-8, Trp-39, Lys-43, 51–53 (GQL), and 65–66 (QS). Residues 83 to 207 (TAWEEAQVNS…WIETRPVTPF (125 aa)) enclose the GST C-terminal domain.

This sequence belongs to the GST superfamily. Sigma family.

It catalyses the reaction RX + glutathione = an S-substituted glutathione + a halide anion + H(+). In terms of biological role, conjugation of reduced glutathione to a wide number of exogenous and endogenous hydrophobic electrophiles. May play a role in the detoxification of reactive oxygen species produced during pathogenic bacterial infection. This Caenorhabditis elegans protein is Probable glutathione S-transferase 5 (gst-5).